The following is a 169-amino-acid chain: Actin-related protein 2/3 complex subunit 4 (169 aa).

This sequence belongs to the ARPC4 family. Component of the Arp2/3 complex composed of arpB/Arp2, arpC/Arp3, arcA/p41-arc, arcB/p34-arc, arcC/p21-arc, arcD/p20-arc and arcE/p16-arc. Interacts with carmil (via the region between the LRR domain and COOH-terminal proline-rich domain); carmil is required for Arp2/3-dependent actin nucleation. Arp2/3 complex, MyoB, MyoC, and the alpha and beta subunits of capping protein all form a larger complex with carmil.

The protein localises to the cytoplasm. It is found in the cytoskeleton. The protein resides in the cytosol. It localises to the cell cortex. Its subcellular location is the cell projection. The protein localises to the pseudopodium. Functions as a component of the Arp2/3 complex which is involved in regulation of actin polymerization and together with an activating nucleation-promoting factor (NPF) mediates the formation of branched actin networks. Seems to contact the pointed end of the daughter actin filament. The Arp2/3 complex is involved in organizing the actin system in cell motility and chemotaxis, in phagocytosis and macropinocytosis, at late steps of endosome processing, and in mitosis. In concert with a group of other proteins, the Arp2/3 complex plays a general role in the rapid activation and adaptation of the actin system to its multiple functions. This chain is Actin-related protein 2/3 complex subunit 4 (arcD), found in Dictyostelium discoideum (Social amoeba).